The chain runs to 234 residues: MDVIPTEAIWWRLFLLFTAVGVLAAGTVTAFFIYSLFKYRSSGQALGEDQGTAGRIYRIMVESPVSGKSKYLLFVTGIIVMGLIVATIDETLYLEKSPPVEDALVVMVIGFQFGWQFEYSVGGETVTTLNYLVVPSDTLIEFRVTSRDVFHAFGIPEFKNKIDAIPGILNSMWIKTPDEPGKVYNAYCYELCGIGHSLMVGKVIVVDKEEFYNAYNSGPDVFSEYVNNVISKYK.

Helical transmembrane passes span 13–33 and 72–92; these read LFLLFTAVGVLAAGTVTAFFI and LLFVTGIIVMGLIVATIDETL. Positions 151, 188, 192, and 196 each coordinate Cu cation.

This sequence belongs to the cytochrome c oxidase subunit 2 family.

It localises to the cell membrane. This chain is Heme-copper oxidase subunit 2 (aoxA), found in Aeropyrum pernix (strain ATCC 700893 / DSM 11879 / JCM 9820 / NBRC 100138 / K1).